Reading from the N-terminus, the 256-residue chain is DNA repair protein RecO (256 aa).

The protein belongs to the RecO family.

In terms of biological role, involved in DNA repair and RecF pathway recombination. The sequence is that of DNA repair protein RecO from Delftia acidovorans (strain DSM 14801 / SPH-1).